The primary structure comprises 121 residues: Glycine cleavage system H protein (121 aa).

A Lipoyl-binding domain is found at 22-102 (IAWVGITKYA…DSSVWLFKAE (81 aa)). Lys-63 bears the N6-lipoyllysine mark.

The protein belongs to the GcvH family. In terms of assembly, the glycine cleavage system is composed of four proteins: P, T, L and H. (R)-lipoate is required as a cofactor.

Its function is as follows. The glycine cleavage system catalyzes the degradation of glycine. The H protein shuttles the methylamine group of glycine from the P protein to the T protein. The sequence is that of Glycine cleavage system H protein from Tropheryma whipplei (strain TW08/27) (Whipple's bacillus).